The following is a 399-amino-acid chain: Zinc finger HIT domain-containing protein 2 (399 aa).

At Met-1 the chain carries N-acetylmethionine. Residues Cys-7, Cys-10, Cys-22, Cys-25, Cys-30, Cys-34, His-38, and Cys-41 each contribute to the Zn(2+) site. The HIT-type zinc finger occupies 7 to 41; it reads CGFCPTGEAQPARYTCPRCNVPYCSLRCYRAHGSC. Disordered stretches follow at residues 71–97 and 141–166; these read LRQQ…GLSG and EELG…PEPV.

As to quaternary structure, interacts (via HIT-type zinc finger) with RUVBL2 in the presence of ATP or ADP; shows a stronger interaction in the presence of ADP.

In terms of biological role, may act as a bridging factor mediating the interaction between the R2TP/Prefoldin-like (R2TP/PFDL) complex and U5 small nuclear ribonucleoprotein (U5 snRNP). Required for the interaction of R2TP complex subunit RPAP3 and prefoldin-like subunit URI1 with U5 snRNP proteins EFTUD2 and PRPF8. May play a role in regulating the composition of the U5 snRNP complex. This is Zinc finger HIT domain-containing protein 2 (ZNHIT2) from Bos taurus (Bovine).